The sequence spans 427 residues: Peptidase B (427 aa).

2 residues coordinate Mn(2+): lysine 195 and aspartate 200. Lysine 207 is a catalytic residue. Mn(2+) contacts are provided by aspartate 218, aspartate 277, and glutamate 279. Residue arginine 281 is part of the active site.

This sequence belongs to the peptidase M17 family. As to quaternary structure, homohexamer. Requires Mn(2+) as cofactor.

Its subcellular location is the cytoplasm. The enzyme catalyses Release of an N-terminal amino acid, Xaa, from a peptide or arylamide. Xaa is preferably Glu or Asp but may be other amino acids, including Leu, Met, His, Cys and Gln.. In terms of biological role, probably plays an important role in intracellular peptide degradation. The sequence is that of Peptidase B from Escherichia fergusonii (strain ATCC 35469 / DSM 13698 / CCUG 18766 / IAM 14443 / JCM 21226 / LMG 7866 / NBRC 102419 / NCTC 12128 / CDC 0568-73).